Here is a 421-residue protein sequence, read N- to C-terminus: UDP-N-acetylglucosamine 1-carboxyvinyltransferase (421 aa).

22-23 (KN) is a phosphoenolpyruvate binding site. Position 93 (Arg93) interacts with UDP-N-acetyl-alpha-D-glucosamine. Cys117 acts as the Proton donor in catalysis. Cys117 carries the 2-(S-cysteinyl)pyruvic acid O-phosphothioketal modification. UDP-N-acetyl-alpha-D-glucosamine-binding positions include 122-126 (RPVDL), Asp308, and Val330.

It belongs to the EPSP synthase family. MurA subfamily.

The protein resides in the cytoplasm. The enzyme catalyses phosphoenolpyruvate + UDP-N-acetyl-alpha-D-glucosamine = UDP-N-acetyl-3-O-(1-carboxyvinyl)-alpha-D-glucosamine + phosphate. The protein operates within cell wall biogenesis; peptidoglycan biosynthesis. Cell wall formation. Adds enolpyruvyl to UDP-N-acetylglucosamine. In Pseudomonas paraeruginosa (strain DSM 24068 / PA7) (Pseudomonas aeruginosa (strain PA7)), this protein is UDP-N-acetylglucosamine 1-carboxyvinyltransferase.